The primary structure comprises 331 residues: Cysteine and histidine-rich domain-containing protein 1 (331 aa).

Zn(2+)-binding residues include Cys5, Cys10, Cys24, His27, Cys42, Cys43, Cys59, His64, Cys157, Cys162, Cys176, His179, Cys194, Cys195, Cys211, and His216. 2 consecutive CHORD domains span residues 5-64 (CYNR…KGLH) and 157-216 (CKNA…TGTH). Positions 227–316 (VVPCRHDWHQ…AEPLLWASLE (90 aa)) constitute a CS domain.

Regulates centrosome duplication. In Gallus gallus (Chicken), this protein is Cysteine and histidine-rich domain-containing protein 1 (CHORDC1).